Here is a 547-residue protein sequence, read N- to C-terminus: Serine/threonine-protein kinase pkn3 (547 aa).

Positions Y18–V288 constitute a Protein kinase domain. ATP-binding positions include I24–V32 and K47. D142 serves as the catalytic Proton acceptor. The segment covering K290 to P299 has biased composition (basic and acidic residues). A disordered region spans residues K290–A327.

Belongs to the protein kinase superfamily. Ser/Thr protein kinase family.

The catalysed reaction is L-seryl-[protein] + ATP = O-phospho-L-seryl-[protein] + ADP + H(+). It catalyses the reaction L-threonyl-[protein] + ATP = O-phospho-L-threonyl-[protein] + ADP + H(+). This is Serine/threonine-protein kinase pkn3 (pkn3) from Myxococcus xanthus.